The following is a 691-amino-acid chain: MTDAISPLTSKDIDTAKPITNDDAIVTQMRTFIDTLKQHNYAYYVLDNPILEDSEYDQLRRSLLELEEEYPDLVQPDSPINQVGDMPLPAFTQVTHDIPMLSLGNVFEYNDLRDFMRRVNDRLSVAQQSPEYEMELKLDGLAVSLKYVHGKFTQAVTRGDGQTGEDITQNAKTIRNMPLWLADAADIELLEVRGEVLMPKAGFERLNRLAAEKEEKTFANPRNAAAGSLRQLDPSVAASRPLAFYAYSVNQGLLDTIDTQSAALAWIKDIGFSVSAVEVVSNPREAQTYYESIIATRADLPFEIDGMVIKVNSLALQQQLGFLSREPRWATAYKFPAETVMTRLHAIDWQVGRTGQITPVGKLEPVKVGGVTVSNVTLHNFGEIQRLDVRAGDMVSVHRAGDVIPKVTRVWHEQRPENSEPVQLPSTCPVCDSPVVLPKDEALARCTGGLFCPAQQQEALIHFVSRRAMDIDGLGASWLISFFEHGLVKTVADIYQLHNHQEELVTLEKLGEKSVQNIISAIEASKHTTLSRFIYALGIRGVGETTAQNLAQQFGDLDALMSASIEKLLLTPDVGAITAELAYKFFRAPHNIEVITALREAGVHWDKVEQVVSEGLPLDGQTWVITGALDSMARDEAKAKLQALGAKVSGSISAKTTALLAGDKAGSKMAKAEKLGVKVVGEEEFLALVGE.

Residues 53-57 (DSEYD), 102-103 (SL), and glutamate 135 contribute to the NAD(+) site. Residue lysine 137 is the N6-AMP-lysine intermediate of the active site. Residues arginine 158, glutamate 195, lysine 310, and lysine 334 each contribute to the NAD(+) site. The Zn(2+) site is built by cysteine 428, cysteine 431, cysteine 446, and cysteine 452. Positions 613–691 (SEGLPLDGQT…EEEFLALVGE (79 aa)) constitute a BRCT domain.

This sequence belongs to the NAD-dependent DNA ligase family. LigA subfamily. Mg(2+) is required as a cofactor. Requires Mn(2+) as cofactor.

It catalyses the reaction NAD(+) + (deoxyribonucleotide)n-3'-hydroxyl + 5'-phospho-(deoxyribonucleotide)m = (deoxyribonucleotide)n+m + AMP + beta-nicotinamide D-nucleotide.. DNA ligase that catalyzes the formation of phosphodiester linkages between 5'-phosphoryl and 3'-hydroxyl groups in double-stranded DNA using NAD as a coenzyme and as the energy source for the reaction. It is essential for DNA replication and repair of damaged DNA. In Psychrobacter arcticus (strain DSM 17307 / VKM B-2377 / 273-4), this protein is DNA ligase.